Reading from the N-terminus, the 444-residue chain is Deoxyguanosinetriphosphate triphosphohydrolase-like protein (444 aa).

In terms of domain architecture, HD spans 66–259; the sequence is RLTHSLEAAQ…MELADDIAYG (194 aa).

The protein belongs to the dGTPase family. Type 2 subfamily.

The polypeptide is Deoxyguanosinetriphosphate triphosphohydrolase-like protein (Vibrio campbellii (strain ATCC BAA-1116)).